A 131-amino-acid polypeptide reads, in one-letter code: Biogenesis of lysosome-related organelles complex 1 subunit 5 (131 aa).

Belongs to the BLOC1S5 family. As to quaternary structure, component of the biogenesis of lysosome-related organelles complex-1 (BLOC-1) composed at least of blos-1, blos-2, blos-4, dsbn-1, glo-2, mutd-1 and snpn-1.

In terms of biological role, component of the biogenesis of lysosome-related organelles complex-1 (BLOC-1) involved in gut granule biogenesis. In Caenorhabditis elegans, this protein is Biogenesis of lysosome-related organelles complex 1 subunit 5 (mutd-1).